Reading from the N-terminus, the 298-residue chain is ATP synthase gamma chain (298 aa).

The protein belongs to the ATPase gamma chain family. In terms of assembly, F-type ATPases have 2 components, CF(1) - the catalytic core - and CF(0) - the membrane proton channel. CF(1) has five subunits: alpha(3), beta(3), gamma(1), delta(1), epsilon(1). CF(0) has three main subunits: a, b and c.

It is found in the cell membrane. In terms of biological role, produces ATP from ADP in the presence of a proton gradient across the membrane. The gamma chain is believed to be important in regulating ATPase activity and the flow of protons through the CF(0) complex. The sequence is that of ATP synthase gamma chain from Frankia casuarinae (strain DSM 45818 / CECT 9043 / HFP020203 / CcI3).